A 438-amino-acid chain; its full sequence is Malic acid transport protein (438 aa).

A run of 10 helical transmembrane segments spans residues serine 37–phenylalanine 57, isoleucine 65–leucine 85, leucine 106–alanine 126, isoleucine 140–isoleucine 160, serine 172–valine 192, valine 205–valine 225, proline 242–alanine 262, phenylalanine 288–phenylalanine 308, alanine 321–isoleucine 341, and phenylalanine 353–valine 373. The segment at alanine 390–valine 438 is disordered. Residues serine 413, serine 423, serine 428, serine 432, serine 433, and serine 437 each carry the phosphoserine modification.

Belongs to the tellurite-resistance/dicarboxylate transporter (TDT) family.

It is found in the membrane. In terms of biological role, permease for malate and other C4 dicarboxylic acids. In Schizosaccharomyces pombe (strain 972 / ATCC 24843) (Fission yeast), this protein is Malic acid transport protein (mae1).